Consider the following 373-residue polypeptide: Glutamate 5-kinase (373 aa).

Lysine 15 is a binding site for ATP. Residues serine 55, aspartate 142, and asparagine 154 each contribute to the substrate site. ATP contacts are provided by residues 174 to 175 (TD) and 216 to 222 (TGGMVTK). The PUA domain maps to 281-359 (SGRVIVDDGA…GEIEAILGYK (79 aa)).

It belongs to the glutamate 5-kinase family.

The protein resides in the cytoplasm. It carries out the reaction L-glutamate + ATP = L-glutamyl 5-phosphate + ADP. It functions in the pathway amino-acid biosynthesis; L-proline biosynthesis; L-glutamate 5-semialdehyde from L-glutamate: step 1/2. In terms of biological role, catalyzes the transfer of a phosphate group to glutamate to form L-glutamate 5-phosphate. In Geobacter metallireducens (strain ATCC 53774 / DSM 7210 / GS-15), this protein is Glutamate 5-kinase.